A 166-amino-acid polypeptide reads, in one-letter code: Methylmalonyl-CoA epimerase, mitochondrial (166 aa).

A mitochondrion-targeting transit peptide spans 1-23 (MFKQLIKTTLTNSRSFSTNTGSG). Residues 37 to 166 (KLNHVAIATP…NGVLVELEEK (130 aa)) enclose the VOC domain. Co(2+) contacts are provided by His40, His112, and Glu162.

This sequence belongs to the methylmalonyl-CoA epimerase family.

Its subcellular location is the mitochondrion. It carries out the reaction (R)-methylmalonyl-CoA = (S)-methylmalonyl-CoA. Methylmalonyl-CoA epimerase involved in propionyl-CoA metabolism. The protein is Methylmalonyl-CoA epimerase, mitochondrial (mcee) of Dictyostelium discoideum (Social amoeba).